The sequence spans 264 residues: 3-methyl-2-oxobutanoate hydroxymethyltransferase (264 aa).

Residues aspartate 45 and aspartate 84 each contribute to the Mg(2+) site. Residues 45-46 (DS), aspartate 84, and lysine 112 each bind 3-methyl-2-oxobutanoate. Glutamate 114 contributes to the Mg(2+) binding site. Glutamate 181 (proton acceptor) is an active-site residue.

The protein belongs to the PanB family. In terms of assembly, homodecamer; pentamer of dimers. Mg(2+) is required as a cofactor.

The protein resides in the cytoplasm. It carries out the reaction 3-methyl-2-oxobutanoate + (6R)-5,10-methylene-5,6,7,8-tetrahydrofolate + H2O = 2-dehydropantoate + (6S)-5,6,7,8-tetrahydrofolate. Its pathway is cofactor biosynthesis; (R)-pantothenate biosynthesis; (R)-pantoate from 3-methyl-2-oxobutanoate: step 1/2. Functionally, catalyzes the reversible reaction in which hydroxymethyl group from 5,10-methylenetetrahydrofolate is transferred onto alpha-ketoisovalerate to form ketopantoate. This Shewanella oneidensis (strain ATCC 700550 / JCM 31522 / CIP 106686 / LMG 19005 / NCIMB 14063 / MR-1) protein is 3-methyl-2-oxobutanoate hydroxymethyltransferase.